The sequence spans 451 residues: MEFLTKITQQLGLVGEIDKVGSVFVLGEEYRPYIFKTQGKADDAETAFGSFLGNAQTNPQLLSDIETRIFFTYRTQFTPIPRDEEGPSPINLTLFFRDNPINTLENVLTDPDSFYSDIGWGCMIRTGQSLLANAIQRVKQTREFRVNLENIDIKEMSIIQWFQDDWKYPLSLHNFVKVEGKKSGMKPGQWFGPSSTARSIQSLINDFPDCGIDRCLISPQSADIYEDEMIRVFEENKRANVLLLFATRLGVNEINSIYWSDIFQILKSSYSVGIAGGKPSSSLYFFGYQNDYLFYLDPHQTQSSSLDMDDNSYYRSCHGHRFSKIHISETDPSMLLGMLISGKAEWDLFKDEFKNSRIIQFVASKPSDDIYEGVDLSPGSVSVHSIQSDLQDTGDYIDVGNFMSEKANSSQPSKNEEFENVKCKNQRILICENPSETEIEQVLVEDSTTDN.

C122 (nucleophile) is an active-site residue. Residues D297 and H299 contribute to the active site.

The protein belongs to the peptidase C54 family. Interacts with ATG8.

It is found in the cytoplasm. The protein resides in the nucleus. It localises to the preautophagosomal structure. It catalyses the reaction [protein]-C-terminal L-amino acid-glycyl-phosphatidylethanolamide + H2O = [protein]-C-terminal L-amino acid-glycine + a 1,2-diacyl-sn-glycero-3-phosphoethanolamine. In terms of biological role, cysteine protease that plays a key role in cytoplasm to vacuole transport (Cvt) and autophagy by mediating both proteolytic activation and delipidation of ATG8. Required for selective autophagic degradation of the nucleus (nucleophagy) as well as for mitophagy which contributes to regulate mitochondrial quantity and quality by eliminating the mitochondria to a basal level to fulfill cellular energy requirements and preventing excess ROS production. The protease activity is required for proteolytic activation of ATG8: cleaves the C-terminal amino acid of ATG8 to reveal a C-terminal glycine. ATG8 ubiquitin-like activity requires the exposure of the glycine at the C-terminus for its conjugation to phosphatidylethanolamine (PE) and its insertion to membranes, which is necessary for autophagy. The ATG8-PE conjugate mediates tethering between adjacent membranes and stimulates membrane hemifusion, leading to expansion of the autophagosomal membrane during autophagy. In addition to the protease activity, also catalyzes deconjugation of PE-conjugated forms of ATG8 during macroautophagy: ATG8 delipidation is required to release the protein from membranes, which facilitates multiple events during macroautophagy, and especially for efficient autophagosome biogenesis, the assembly of ATG9-containing tubulovesicular clusters into phagophores/autophagosomes, and for the disassembly of PAS-associated ATG components. ATG8 delipidation by ATG4 also recycles ATG8-PE generated on inappropriate membranes to maintain a reservoir of unlipidated ATG8 that is required for autophagosome formation at the PAS. This is Cysteine protease ATG4 from Kluyveromyces marxianus (strain DMKU3-1042 / BCC 29191 / NBRC 104275) (Yeast).